Here is a 254-residue protein sequence, read N- to C-terminus: 5'-nucleotidase SurE (254 aa).

A divalent metal cation is bound by residues Asp-8, Asp-9, Ser-40, and Asn-93.

The protein belongs to the SurE nucleotidase family. It depends on a divalent metal cation as a cofactor.

Its subcellular location is the cytoplasm. The catalysed reaction is a ribonucleoside 5'-phosphate + H2O = a ribonucleoside + phosphate. In terms of biological role, nucleotidase that shows phosphatase activity on nucleoside 5'-monophosphates. This is 5'-nucleotidase SurE from Actinobacillus pleuropneumoniae serotype 5b (strain L20).